The following is a 426-amino-acid chain: Riboflavin biosynthesis protein PYRD, chloroplastic (426 aa).

Residues 1–61 (MQISCLPISI…SQTGFSNPVL (61 aa)) constitute a chloroplast transit peptide. The CMP/dCMP-type deaminase domain maps to 72–194 (VDDSFYMRKC…RLKDAGIDVT (123 aa)). His-121 contributes to the Zn(2+) binding site. Catalysis depends on Glu-123, which acts as the Proton donor. Cys-146 and Cys-155 together coordinate Zn(2+).

Zn(2+) is required as a cofactor.

The protein resides in the plastid. The protein localises to the chloroplast. It carries out the reaction 2,5-diamino-6-hydroxy-4-(5-phosphoribosylamino)-pyrimidine + H2O + H(+) = 5-amino-6-(5-phospho-D-ribosylamino)uracil + NH4(+). It functions in the pathway cofactor biosynthesis; riboflavin biosynthesis; 5-amino-6-(D-ribitylamino)uracil from GTP: step 2/4. In terms of biological role, monofunctional pyrimidine deaminase involved in the riboflavin biosynthesis pathway. Also has a reductase domain that lacks catalytically essential substrate-binding residues. The chain is Riboflavin biosynthesis protein PYRD, chloroplastic (PYRD) from Arabidopsis thaliana (Mouse-ear cress).